The primary structure comprises 60 residues: Short neurotoxin 1 (60 aa).

Cystine bridges form between Cys-3-Cys-22, Cys-17-Cys-39, Cys-41-Cys-52, and Cys-53-Cys-58.

It belongs to the three-finger toxin family. Short-chain subfamily. Type I alpha-neurotoxin sub-subfamily. Expressed by the venom gland.

It localises to the secreted. Its function is as follows. Binds to muscle nicotinic acetylcholine receptor (nAChR) and inhibit acetylcholine from binding to the receptor, thereby impairing neuromuscular transmission. The protein is Short neurotoxin 1 of Hydrophis ornatus (Ornate reef seasnake).